The sequence spans 213 residues: Ubiquitin-conjugating enzyme E2 S (213 aa).

The region spanning 13 to 159 is the UBC core domain; the sequence is QIIRQVAKEV…ARMMTEIHAK (147 aa). C97 acts as the Glycyl thioester intermediate in catalysis. The tract at residues 157 to 213 is disordered; that stretch reads HAKPTTKTAPTKNEETNCPSTSGTQSTSEGPMAKKHAGDKNAAEKKKKEKKRALRRL. Polar residues predominate over residues 174 to 185; that stretch reads CPSTSGTQSTSE. Positions 192–202 are enriched in basic and acidic residues; sequence HAGDKNAAEKK. Basic residues predominate over residues 203–213; that stretch reads KKEKKRALRRL.

This sequence belongs to the ubiquitin-conjugating enzyme family.

It carries out the reaction S-ubiquitinyl-[E1 ubiquitin-activating enzyme]-L-cysteine + [E2 ubiquitin-conjugating enzyme]-L-cysteine = [E1 ubiquitin-activating enzyme]-L-cysteine + S-ubiquitinyl-[E2 ubiquitin-conjugating enzyme]-L-cysteine.. The protein operates within protein modification; protein ubiquitination. Catalyzes the covalent attachment of ubiquitin to other proteins. Acts as an essential factor of the anaphase promoting complex/cyclosome (APC/C), a cell cycle-regulated ubiquitin ligase that controls progression through mitosis. Acts by specifically elongating polyubiquitin chains initiated by the E2 enzyme UBCH10 on APC/C substrates, enhancing the degradation of APC/C substrates by the proteasome and promoting mitotic exit. The polypeptide is Ubiquitin-conjugating enzyme E2 S (Branchiostoma floridae (Florida lancelet)).